Consider the following 454-residue polypeptide: tRNA modification GTPase MnmE (454 aa).

3 residues coordinate (6S)-5-formyl-5,6,7,8-tetrahydrofolate: Arg-23, Glu-80, and Lys-120. A TrmE-type G domain is found at 216-377 (GMKVVIAGRP…LRNHLKQSMG (162 aa)). Asn-226 is a binding site for K(+). GTP-binding positions include 226 to 231 (NAGKSS), 245 to 251 (TDIAGTT), 270 to 273 (DTAG), 335 to 338 (NKAD), and 358 to 360 (SAR). Ser-230 is a binding site for Mg(2+). Positions 245, 247, and 250 each coordinate K(+). Thr-251 contributes to the Mg(2+) binding site. (6S)-5-formyl-5,6,7,8-tetrahydrofolate is bound at residue Lys-454.

It belongs to the TRAFAC class TrmE-Era-EngA-EngB-Septin-like GTPase superfamily. TrmE GTPase family. As to quaternary structure, homodimer. Heterotetramer of two MnmE and two MnmG subunits. K(+) serves as cofactor.

It is found in the cytoplasm. Its function is as follows. Exhibits a very high intrinsic GTPase hydrolysis rate. Involved in the addition of a carboxymethylaminomethyl (cmnm) group at the wobble position (U34) of certain tRNAs, forming tRNA-cmnm(5)s(2)U34. The polypeptide is tRNA modification GTPase MnmE (Salmonella paratyphi C (strain RKS4594)).